The chain runs to 319 residues: ATP-dependent 6-phosphofructokinase (319 aa).

ATP-binding positions include glycine 11, 72–73 (RS), and 102–105 (GDGS). Aspartate 103 is a binding site for Mg(2+). 126 to 128 (TID) contacts substrate. Aspartate 128 acts as the Proton acceptor in catalysis. Arginine 155 provides a ligand contact to ADP. Residues arginine 163 and 170–172 (MGR) each bind substrate. 186-188 (GAE) provides a ligand contact to ADP. Substrate is bound by residues glutamate 223, arginine 245, and 251–254 (HTQR).

The protein belongs to the phosphofructokinase type A (PFKA) family. ATP-dependent PFK group I subfamily. Prokaryotic clade 'B1' sub-subfamily. Homotetramer. Requires Mg(2+) as cofactor.

Its subcellular location is the cytoplasm. It carries out the reaction beta-D-fructose 6-phosphate + ATP = beta-D-fructose 1,6-bisphosphate + ADP + H(+). It functions in the pathway carbohydrate degradation; glycolysis; D-glyceraldehyde 3-phosphate and glycerone phosphate from D-glucose: step 3/4. Allosterically activated by ADP and other diphosphonucleosides, and allosterically inhibited by phosphoenolpyruvate. In terms of biological role, catalyzes the phosphorylation of D-fructose 6-phosphate to fructose 1,6-bisphosphate by ATP, the first committing step of glycolysis. The polypeptide is ATP-dependent 6-phosphofructokinase (Sulfurimonas denitrificans (strain ATCC 33889 / DSM 1251) (Thiomicrospira denitrificans (strain ATCC 33889 / DSM 1251))).